The chain runs to 180 residues: Sec-independent protein translocase protein TatB (180 aa).

The chain crosses the membrane as a helical span at residues 1–21; sequence MFDIGWSELLVIGVVALIAIG. A disordered region spans residues 77 to 180; it reads TRGDLMTRLT…DQTARGAKAS (104 aa). A compositionally biased stretch (low complexity) spans 105–129; the sequence is ADKPSVSSDAASASGSAAPEAGAAE.

This sequence belongs to the TatB family. The Tat system comprises two distinct complexes: a TatABC complex, containing multiple copies of TatA, TatB and TatC subunits, and a separate TatA complex, containing only TatA subunits. Substrates initially bind to the TatABC complex, which probably triggers association of the separate TatA complex to form the active translocon.

It is found in the cell inner membrane. In terms of biological role, part of the twin-arginine translocation (Tat) system that transports large folded proteins containing a characteristic twin-arginine motif in their signal peptide across membranes. Together with TatC, TatB is part of a receptor directly interacting with Tat signal peptides. TatB may form an oligomeric binding site that transiently accommodates folded Tat precursor proteins before their translocation. In Nitrobacter winogradskyi (strain ATCC 25391 / DSM 10237 / CIP 104748 / NCIMB 11846 / Nb-255), this protein is Sec-independent protein translocase protein TatB.